The following is a 646-amino-acid chain: Aquaglycerol porin AQY3 (646 aa).

Positions 1 to 14 (MSYESGRSSSSSES) are enriched in low complexity. Disordered regions lie at residues 1–68 (MSYE…SRNK) and 175–262 (KNMD…KKRT). Over 1–350 (MSYESGRSSS…AKIRYHMREP (350 aa)) the chain is Cytoplasmic. Over residues 19 to 41 (TLKEEPNGKIAWEESVKKSRENN) the composition is skewed to basic and acidic residues. Polar residues predominate over residues 190 to 201 (TDISRGGSTTSV). The helical transmembrane segment at 351-371 (FAEFLGTLVLVIFGVGGNLQA) threads the bilayer. Over 372–383 (TVTKGSGGSYES) the chain is Extracellular. The helical transmembrane segment at 384-404 (LSFAWGFGCMLGVYVAGGISG) threads the bilayer. Residues 405–427 (GHINPAVTISMAIFRKFPWKKVP) are Cytoplasmic-facing. Residues 408-410 (NPA) carry the NPA 1 motif. The chain crosses the membrane as a helical span at residues 428–448 (VYIVAQIIGAYFGGAMAYGYF). The Extracellular segment spans residues 449 to 481 (WSSITEFEGGPHIRTTATGACLFTDPKSYVTWR). A helical membrane pass occupies residues 482 to 502 (NAFFDEFIGASILVGCLMALL). Residues 503–509 (DDSNAPP) lie on the Cytoplasmic side of the membrane. The helical transmembrane segment at 510–530 (GNGMTALIIGFLVAAIGMALG) threads the bilayer. Topologically, residues 531–569 (YQTSFTINPARDLGPRIFASMIGYGPHAFHLTHWWWTWG) are extracellular. Positions 538 to 540 (NPA) match the NPA 2 motif. The helical transmembrane segment at 570–590 (AWGGPIAGGIAGALIYDIFIF) threads the bilayer. Residues 591-646 (TGCESPVNYPDNGYIENRVGKLLHAEFHQNDGTVSDESGVNSNSNTGSKKSVPTSS) are Cytoplasmic-facing. The interval 621 to 646 (DGTVSDESGVNSNSNTGSKKSVPTSS) is disordered.

The protein belongs to the MIP/aquaporin (TC 1.A.8) family.

The protein localises to the cell membrane. The catalysed reaction is glycerol(in) = glycerol(out). Functionally, channel protein that mediates glycerol entry under ethanol stimulation. Does not seem to mediate glycerol uptake under standard conditions. The chain is Aquaglycerol porin AQY3 from Saccharomyces cerevisiae (strain ATCC 204508 / S288c) (Baker's yeast).